Here is a 429-residue protein sequence, read N- to C-terminus: Ribosomal RNA small subunit methyltransferase B (429 aa).

S-adenosyl-L-methionine contacts are provided by residues 254–260, D277, D303, and D322; that span reads CAAPGGK. C375 (nucleophile) is an active-site residue.

The protein belongs to the class I-like SAM-binding methyltransferase superfamily. RsmB/NOP family.

It localises to the cytoplasm. It carries out the reaction cytidine(967) in 16S rRNA + S-adenosyl-L-methionine = 5-methylcytidine(967) in 16S rRNA + S-adenosyl-L-homocysteine + H(+). Its function is as follows. Specifically methylates the cytosine at position 967 (m5C967) of 16S rRNA. In Shigella boydii serotype 4 (strain Sb227), this protein is Ribosomal RNA small subunit methyltransferase B.